The following is a 158-amino-acid chain: 2-C-methyl-D-erythritol 2,4-cyclodiphosphate synthase (158 aa).

A divalent metal cation is bound by residues D8 and H10. Residues 8-10 (DSH) and 34-35 (HS) contribute to the 4-CDP-2-C-methyl-D-erythritol 2-phosphate site. H42 is a binding site for a divalent metal cation. 4-CDP-2-C-methyl-D-erythritol 2-phosphate contacts are provided by residues 56-58 (DIG), 61-65 (FPDND), and R142.

The protein belongs to the IspF family. In terms of assembly, homotrimer. Requires a divalent metal cation as cofactor.

It carries out the reaction 4-CDP-2-C-methyl-D-erythritol 2-phosphate = 2-C-methyl-D-erythritol 2,4-cyclic diphosphate + CMP. It functions in the pathway isoprenoid biosynthesis; isopentenyl diphosphate biosynthesis via DXP pathway; isopentenyl diphosphate from 1-deoxy-D-xylulose 5-phosphate: step 4/6. In terms of biological role, involved in the biosynthesis of isopentenyl diphosphate (IPP) and dimethylallyl diphosphate (DMAPP), two major building blocks of isoprenoid compounds. Catalyzes the conversion of 4-diphosphocytidyl-2-C-methyl-D-erythritol 2-phosphate (CDP-ME2P) to 2-C-methyl-D-erythritol 2,4-cyclodiphosphate (ME-CPP) with a corresponding release of cytidine 5-monophosphate (CMP). The sequence is that of 2-C-methyl-D-erythritol 2,4-cyclodiphosphate synthase from Brachyspira hyodysenteriae (strain ATCC 49526 / WA1).